Consider the following 1440-residue polypeptide: Protein lin-15B (1440 aa).

Disordered stretches follow at residues 1 to 22 (MQTL…SSSS), 48 to 67 (ILRH…HLDA), 618 to 660 (PKEE…GRPI), and 738 to 769 (KDEP…PSSY). The span at 10 to 22 (TSNPASIPTSSSS) shows a compositional bias: low complexity. Residues 631–646 (STSSPATSSPTIIRPR) are compositionally biased toward low complexity. The segment covering 757 to 767 (NRTTASSQGPS) has biased composition (polar residues). Residues 1135 to 1209 (NPGVCCFCSK…LLKGMIPDAA (75 aa)) form a THAP-type zinc finger. Disordered stretches follow at residues 1239–1281 (AIDL…EPSQ), 1298–1350 (RELS…GTSQ), and 1395–1440 (FADE…PSNE). Over residues 1254–1264 (TQEEEEEEEYE) the composition is skewed to acidic residues. The a.T hook 1 DNA-binding region spans 1317–1329 (PNPRGRPRKYPKN). Residues 1396–1407 (ADEEEEEEEYEE) are compositionally biased toward acidic residues. Positions 1418-1430 (GRPVGRPRKDANK) form a DNA-binding region, a.T hook 2.

Synthetic multivulva (synMuv) class B protein. SynMuv proteins are required to repress the induction of vulval development. Acts redundantly with SynMuv class A protein lin-15A to negatively regulate vulval development. Regulates let-23 basal activity. The sequence is that of Protein lin-15B from Caenorhabditis elegans.